We begin with the raw amino-acid sequence, 2513 residues long: Polyprotein P1234 (2513 aa).

The 231-residue stretch at 30–260 (VAQQVTPNDH…EHRASLQSWH (231 aa)) folds into the Alphavirus-like MT domain. The tract at residues 245 to 264 (GSTLYPEHRASLQSWHLPSV) is nsP1 membrane-binding. Residue Cys-420 is the site of S-palmitoyl cysteine; by host attachment. The (+)RNA virus helicase ATP-binding domain maps to 695–850 (ELTNPPYHEL…KDICTKTFYK (156 aa)). Position 726-733 (726-733 (GTPGSGKS)) interacts with a ribonucleoside 5'-triphosphate. The region spanning 851-999 (YISRRCTQPV…IEDWEAEHKG (149 aa)) is the (+)RNA virus helicase C-terminal domain. The region spanning 1012–1341 (NPFSCKTNVC…CVISSVYEGT (330 aa)) is the Peptidase C9 domain. The tract at residues 1013 to 1032 (PFSCKTNVCWAKALEPILAT) is nucleolus localization signal. The active-site For cysteine protease nsP2 activity is the Cys-1021. Residues 1066-1075 (IKFFGMDLTS) carry the Nuclear export signal motif. Residue His-1098 is the For cysteine protease nsP2 activity of the active site. The Nuclear localization signal motif lies at 1196-1200 (PRKRI). The region spanning 1348 to 1507 (APSYRTKREN…RIDAALQLKE (160 aa)) is the Macro domain. The ADP-D-ribose site is built by Asn-1371, Gly-1379, Gly-1459, Ile-1460, and Tyr-1461. Zn(2+) is bound by residues Cys-1610, Cys-1612, Cys-1635, and Cys-1653. Over residues 1679-1696 (PTAPPAQAEEAPEVVATP) the composition is skewed to low complexity. A disordered region spans residues 1679–1705 (PTAPPAQAEEAPEVVATPSPSTADNTS). 2 consecutive short sequence motifs (FGDF; binding to host G3BP1) follow at residues 1837 to 1840 (FGSF) and 1860 to 1863 (FGSF). The RdRp catalytic domain maps to 2267–2382 (DPVLETDIAS…HGVVSDKEMA (116 aa)).

Interacts with non-structural protein 3. Interacts with RNA-directed RNA polymerase nsP4. Interacts with protease nsP2. interacts with itself. Interacts with host TMEM45B; this interaction leads to viral replication inhibition. As to quaternary structure, interacts with mRNA-capping enzyme nsP1. Interacts with host DDX1. Interacts with host DDX3. Interacts (via C-terminus) with host G3BP1; this interaction inhibits the formation of host stress granules on viral mRNAs and the nsp3-G3BP1 complexes bind viral RNAs and probably orchestrate the assembly of viral replication complexes. Interacts (via C-terminus) with host G3BP2; this interaction inhibits the formation of host stress granules on viral mRNAs and the nsp3-G3BP2 complexes bind viral RNAs and probably orchestrate the assembly of viral replication complexes. In terms of assembly, interacts with mRNA-capping enzyme nsP1. Interacts with protease nsP2. interacts with itself. Interacts with host TMEM45B; this interaction leads to viral replication inhibition. Interacts with RNA-directed RNA polymerase nsP4. Interacts with mRNA-capping enzyme nsP1. Interacts with KPNA1/karyopherin-alpha1; this interaction probably allows the active transport of protease nsP2 into the host nucleus. Requires Mg(2+) as cofactor. Mn(2+) serves as cofactor. Specific enzymatic cleavages in vivo yield mature proteins. The processing of the polyprotein is temporally regulated. In early stages (1.7 hpi), P1234 is first cleaved in trans through its nsP2 protease activity, releasing P123' and nsP4, which associate to form the early replication complex. At the same time, P1234 is also cut at the nsP1/nsP2 site early in infection but with lower efficiency. After replication of the viral minus-strand RNAs (4 hpi), the polyproteins are cut at the nsP1/nsP2 and nsP2/nsP3 sites very efficiently, preventing accumulation of P123' and P1234 and allowing the formation of the late replication complex. NsP3'/nsP4 site is not cleaved anymore and P34 is produced rather than nsP4. In terms of processing, specific enzymatic cleavages in vivo yield mature proteins. The processing of the polyprotein is temporally regulated. In early stages (1.7 hpi), P123 is cleaved at the nsP1/nsP2 site with low efficiency. After replication of the viral minus-strand RNAs (4 hpi), the polyproteins are cut at the nsP1/nsP2 and nsP2/nsP3 sites very efficiently, preventing accumulation of P123 and allowing the formation of the late replication complex. Post-translationally, specific enzymatic cleavages in vivo yield mature proteins. The processing of the polyprotein is temporally regulated. In early stages (1.7 hpi), P123' is cleaved at the nsP1/nsP2 site with low efficiency. After replication of the viral minus-strand RNAs (4 hpi), the polyproteins are cut at the nsP1/nsP2 and nsP2/nsP3 sites very efficiently, preventing accumulation of P123' and allowing the formation of the late replication complex. Palmitoylated by host palmitoyltransferases ZDHHC2 and ZDHHC19. In terms of processing, phosphorylated by host on serines and threonines. Post-translationally, ubiquitinated; targets the protein for rapid degradation via the ubiquitin system. Nsp4 is present in extremely low quantities due to low frequency of translation through the amber stop-codon and the degradation by the ubiquitin pathway.

It is found in the host cytoplasmic vesicle membrane. It localises to the host cell membrane. The protein localises to the host cell projection. Its subcellular location is the host filopodium. The protein resides in the host nucleus. It is found in the host cytoplasm. It carries out the reaction GTP + S-adenosyl-L-methionine = N(7)-methyl-GTP + S-adenosyl-L-homocysteine. The catalysed reaction is N(7)-methyl-GTP + L-histidyl-[protein] = N(tele)-(N(7)-methylguanosine 5'-phospho)-L-histidyl-[protein] + diphosphate. It catalyses the reaction N(tele)-(N(7)-methylguanosine 5'-phospho)-L-histidyl-[protein] + a 5'-end diphospho-(purine-ribonucleoside) in mRNA + H(+) = a 5'-end (N(7)-methyl 5'-triphosphoguanosine)-(purine-ribonucleoside) in mRNA + L-histidyl-[protein]. The enzyme catalyses a 5'-end triphospho-ribonucleoside in mRNA + H2O = a 5'-end diphospho-ribonucleoside in mRNA + phosphate + H(+). It carries out the reaction a ribonucleoside 5'-triphosphate + H2O = a ribonucleoside 5'-diphosphate + phosphate + H(+). The catalysed reaction is ATP + H2O = ADP + phosphate + H(+). It catalyses the reaction RNA(n) + a ribonucleoside 5'-triphosphate = RNA(n+1) + diphosphate. The enzyme catalyses RNA(n) + ATP = RNA(n)-3'-adenine ribonucleotide + diphosphate. It carries out the reaction 4-O-(ADP-D-ribosyl)-L-aspartyl-[protein] + H2O = L-aspartyl-[protein] + ADP-D-ribose + H(+). The catalysed reaction is 5-O-(ADP-D-ribosyl)-L-glutamyl-[protein] + H2O = L-glutamyl-[protein] + ADP-D-ribose + H(+). It catalyses the reaction ADP-alpha-D-ribose 1''-phosphate + H2O = ADP-D-ribose + phosphate. In terms of biological role, inactive precursor of the viral replicase, which is activated by cleavages carried out by the viral protease nsP2. Its function is as follows. The early replication complex formed by the polyprotein P123 and nsP4 synthesizes minus-strand RNAs. Polyprotein P123 is a short-lived polyprotein that accumulates during early stage of infection. As soon P123 is cleaved into mature proteins, the plus-strand RNAs synthesis begins. The early replication complex formed by the polyprotein P123' and nsP4 synthesizes minus-strand RNAs. Polyprotein P123' is a short-lived polyprotein that accumulates during early stage of infection. As soon P123' is cleaved into mature proteins, the plus-strand RNAs synthesis begins. Functionally, cytoplasmic capping enzyme that catalyzes two virus-specific reactions: methyltransferase and nsP1 guanylyltransferase. mRNA-capping is necessary since all viral RNAs are synthesized in the cytoplasm, and host capping enzymes are restricted to the nucleus. The enzymatic reaction involves a covalent link between 7-methyl-GMP and nsP1, whereas eukaryotic capping enzymes form a covalent complex only with GMP. nsP1 capping consists in the following reactions: GTP is first methylated into 7-methyl-GMP and then is covalently linked to nsP1 to form the m7GMp-nsP1 complex from which 7-methyl-GMP complex is transferred to the mRNA to create the cap structure. NsP1 is needed for the initiation of the minus-strand RNAs synthesis. Probably serves as a membrane anchor for the replication complex composed of nsP1-nsP4. Palmitoylated nsP1 is remodeling host cell cytoskeleton, and induces filopodium-like structure formation at the surface of the host cell. In terms of biological role, multifunctional protein whose N-terminus is part of the RNA polymerase complex and displays NTPase, RNA triphosphatase and helicase activities. NTPase and RNA triphosphatase are involved in viral RNA capping and helicase keeps a check on the dsRNA replication intermediates. The C-terminus harbors a protease that specifically cleaves the polyproteins and releases the mature proteins. Required for the shutoff of minus-strand RNAs synthesis. Specifically inhibits the host IFN response by promoting the nuclear export of host STAT1. Also inhibits host transcription by inducing rapid proteasome-dependent degradation of POLR2A, a catalytic subunit of the RNAPII complex. The resulting inhibition of cellular protein synthesis serves to ensure maximal viral gene expression and to evade host immune response. Its function is as follows. Seems to be essential for minus-strand RNAs and subgenomic 26S mRNAs synthesis. Displays mono-ADP-ribosylhydrolase activity. ADP-ribosylation is a post-translantional modification that controls various processes of the host cell and the virus probably needs to revert it for optimal viral replication. Binds proteins of G3BP family and sequesters them into the viral RNA replication complexes thereby inhibiting the formation of host stress granules on viral mRNAs. The nsp3-G3BP complexes bind viral RNAs and probably orchestrate the assembly of viral replication complexes, thanks to the ability of G3BP family members to self-assemble and bind DNA. Seems to be essential for minus-strand RNAs and subgenomic 26S mRNAs synthesis. Displays mono-ADP-ribosylhydrolase activity. ADP-ribosylation is a post-translational modification that controls various processes of the host cell and the virus probably needs to revert it for optimal viral replication. Binds proteins of G3BP family and sequesters them into the viral RNA replication complexes thereby inhibiting the formation of host stress granules on viral mRNAs. The nsp3'-G3BP complexes bind viral RNAs and probably orchestrate the assembly of viral replication complexes, thanks to the ability of G3BP family members to self-assemble and bind DNA. Functionally, RNA dependent RNA polymerase. Replicates genomic and antigenomic RNA by recognizing replications specific signals. The early replication complex formed by the polyprotein P123 and nsP4 synthesizes minus-strand RNAs. The late replication complex composed of fully processed nsP1-nsP4 is responsible for the production of genomic and subgenomic plus-strand RNAs. The core catalytic domain of nsP4 also possesses terminal adenylyltransferase (TATase) activity that is probably involved in maintenance and repair of the poly(A) tail, an element required for replication of the viral genome. The protein is Polyprotein P1234 of Acrocephalus scirpaceus (Eurasian reed-warbler).